A 245-amino-acid chain; its full sequence is Small ribosomal subunit protein uS2 (245 aa).

It belongs to the universal ribosomal protein uS2 family.

The protein is Small ribosomal subunit protein uS2 of Pseudomonas putida (strain GB-1).